The primary structure comprises 514 residues: 2,3-bisphosphoglycerate-independent phosphoglycerate mutase (514 aa).

Aspartate 14 and serine 64 together coordinate Mn(2+). Serine 64 (phosphoserine intermediate) is an active-site residue. Substrate-binding positions include histidine 125, 155–156 (RD), arginine 187, arginine 193, 263–266 (RADR), and lysine 336. Mn(2+) is bound by residues aspartate 403, histidine 407, aspartate 444, histidine 445, and histidine 463.

This sequence belongs to the BPG-independent phosphoglycerate mutase family. As to quaternary structure, monomer. Mn(2+) serves as cofactor.

It catalyses the reaction (2R)-2-phosphoglycerate = (2R)-3-phosphoglycerate. Its pathway is carbohydrate degradation; glycolysis; pyruvate from D-glyceraldehyde 3-phosphate: step 3/5. Functionally, catalyzes the interconversion of 2-phosphoglycerate and 3-phosphoglycerate. The polypeptide is 2,3-bisphosphoglycerate-independent phosphoglycerate mutase (Escherichia coli (strain ATCC 8739 / DSM 1576 / NBRC 3972 / NCIMB 8545 / WDCM 00012 / Crooks)).